Here is a 352-residue protein sequence, read N- to C-terminus: Carbohydrate sulfotransferase 11 (352 aa).

At 1–16 (MKQTILDLMRMSRICR) the chain is on the cytoplasmic side. A helical; Signal-anchor for type II membrane protein membrane pass occupies residues 17 to 37 (MVLATCLGSFILVIFYFQSMF). Topologically, residues 38–352 (QPVMRRNPFA…YSIPSYLKLQ (315 aa)) are lumenal. 3'-phosphoadenylyl sulfate contacts are provided by residues 124 to 130 (PKVACTN) and 186 to 194 (REPFERLVS). N-linked (GlcNAc...) asparagine glycosylation is found at Asn205, Asn223, Asn321, and Asn342.

This sequence belongs to the sulfotransferase 2 family.

The protein localises to the golgi apparatus membrane. It catalyses the reaction chondroitin beta-D-glucuronate + n 3'-phosphoadenylyl sulfate = chondroitin 4'-sulfate + n adenosine 3',5'-bisphosphate + n H(+). Catalyzes the transfer of sulfate to position 4 of the N-acetylgalactosamine (GalNAc) residue of chondroitin. The protein is Carbohydrate sulfotransferase 11 (chst11) of Danio rerio (Zebrafish).